The following is a 165-amino-acid chain: Large ribosomal subunit protein uL11 (165 aa).

Belongs to the universal ribosomal protein uL11 family. As to quaternary structure, component of the large ribosomal subunit. Mature ribosomes consist of a small (40S) and a large (60S) subunit. The 40S subunit contains about 32 different proteins and 1 molecule of RNA (18S). The 60S subunit contains 45 different proteins and 3 molecules of RNA (25S, 5.8S and 5S).

Its subcellular location is the cytoplasm. In terms of biological role, component of the ribosome, a large ribonucleoprotein complex responsible for the synthesis of proteins in the cell. The small ribosomal subunit (SSU) binds messenger RNAs (mRNAs) and translates the encoded message by selecting cognate aminoacyl-transfer RNA (tRNA) molecules. The large subunit (LSU) contains the ribosomal catalytic site termed the peptidyl transferase center (PTC), which catalyzes the formation of peptide bonds, thereby polymerizing the amino acids delivered by tRNAs into a polypeptide chain. The nascent polypeptides leave the ribosome through a tunnel in the LSU and interact with protein factors that function in enzymatic processing, targeting, and the membrane insertion of nascent chains at the exit of the ribosomal tunnel. In Candida albicans (strain SC5314 / ATCC MYA-2876) (Yeast), this protein is Large ribosomal subunit protein uL11 (RPL12).